A 327-amino-acid polypeptide reads, in one-letter code: Undecaprenyl-phosphate 4-deoxy-4-formamido-L-arabinose transferase (327 aa).

Topologically, residues 1-235 (MFDAAPIKKV…TCLTTTPLRL (235 aa)) are cytoplasmic. A helical membrane pass occupies residues 236–256 (LSLLGSVIAIGGFSLSVLLIV). Residues 257–269 (LRLALGPQWAAEG) are Periplasmic-facing. Residues 270 to 290 (VFMLFAVLFTFIGAQFIGMGL) traverse the membrane as a helical segment. Topologically, residues 291 to 327 (LGEYIGRIYNDVRARPRYFVQQVIYPESTSFTEESHQ) are cytoplasmic.

Belongs to the glycosyltransferase 2 family.

The protein resides in the cell inner membrane. It carries out the reaction UDP-4-deoxy-4-formamido-beta-L-arabinose + di-trans,octa-cis-undecaprenyl phosphate = 4-deoxy-4-formamido-alpha-L-arabinopyranosyl di-trans,octa-cis-undecaprenyl phosphate + UDP. The protein operates within glycolipid biosynthesis; 4-amino-4-deoxy-alpha-L-arabinose undecaprenyl phosphate biosynthesis; 4-amino-4-deoxy-alpha-L-arabinose undecaprenyl phosphate from UDP-4-deoxy-4-formamido-beta-L-arabinose and undecaprenyl phosphate: step 1/2. It participates in bacterial outer membrane biogenesis; lipopolysaccharide biosynthesis. Its function is as follows. Catalyzes the transfer of 4-deoxy-4-formamido-L-arabinose from UDP to undecaprenyl phosphate. The modified arabinose is attached to lipid A and is required for resistance to polymyxin and cationic antimicrobial peptides. The chain is Undecaprenyl-phosphate 4-deoxy-4-formamido-L-arabinose transferase from Salmonella newport (strain SL254).